Reading from the N-terminus, the 396-residue chain is Serpin-ZXA (396 aa).

The segment at 343-367 (GTEAAAATAAVITLRSAPIAEDFVA) is RCL.

It belongs to the serpin family.

Its function is as follows. Probable serine protease inhibitor. This chain is Serpin-ZXA, found in Oryza sativa subsp. japonica (Rice).